A 113-amino-acid chain; its full sequence is N(2)-fixation sustaining protein CowN (113 aa).

It belongs to the CowN family.

Functionally, is required to sustain N(2)-dependent growth in the presence of low levels of carbon monoxide (CO). Probably acts by protecting the N(2) fixation ability of the nitrogenase complex, which is inactivated in the presence of CO. This Wolinella succinogenes (strain ATCC 29543 / DSM 1740 / CCUG 13145 / JCM 31913 / LMG 7466 / NCTC 11488 / FDC 602W) (Vibrio succinogenes) protein is N(2)-fixation sustaining protein CowN.